The primary structure comprises 421 residues: Medium-chain specific acyl-CoA dehydrogenase, mitochondrial (421 aa).

Residues 1–25 constitute a mitochondrion transit peptide; sequence MAAAFRRGCRVLRSVSHFECRTQHS. 2 positions are modified to N6-acetyllysine; alternate: K30 and K69. 2 positions are modified to N6-succinyllysine; alternate: K30 and K69. The residue at position 79 (K79) is an N6-acetyllysine. Residue 158–167 coordinates FAD; it reads YCVTEPSAGS. Residue S167 participates in octanoyl-CoA binding. Position 179 is an N6-succinyllysine (K179). 191-193 contacts FAD; sequence WIT. An N6-acetyllysine; alternate modification is found at K212. K212 carries the N6-succinyllysine; alternate modification. An octanoyl-CoA-binding site is contributed by S216. K217, K235, K259, and K271 each carry N6-acetyllysine; alternate. N6-succinyllysine; alternate is present on residues K217, K235, K259, and K271. Positions 278 and 281 each coordinate octanoyl-CoA. An N6-acetyllysine modification is found at K301. FAD contacts are provided by residues 306–308 and 316–317; these read RKT and HQ. Octanoyl-CoA-binding residues include R349 and T351. At T351 the chain carries Phosphothreonine. 374–378 contacts FAD; sequence QIFGG. E401 contacts octanoyl-CoA. The active-site Proton acceptor is the E401. An FAD-binding site is contributed by 402–405; it reads GTAQ.

Belongs to the acyl-CoA dehydrogenase family. As to quaternary structure, homotetramer. Interacts with the heterodimeric electron transfer flavoprotein ETF. FAD serves as cofactor. In terms of processing, acetylated. Could occur at proximity of the cofactor-binding sites and reduce the catalytic activity. Could be deacetylated by SIRT3.

It is found in the mitochondrion matrix. The catalysed reaction is a medium-chain 2,3-saturated fatty acyl-CoA + oxidized [electron-transfer flavoprotein] + H(+) = a medium-chain (2E)-enoyl-CoA + reduced [electron-transfer flavoprotein]. The enzyme catalyses pentanoyl-CoA + oxidized [electron-transfer flavoprotein] + H(+) = (2E)-pentenoyl-CoA + reduced [electron-transfer flavoprotein]. It catalyses the reaction hexanoyl-CoA + oxidized [electron-transfer flavoprotein] + H(+) = (2E)-hexenoyl-CoA + reduced [electron-transfer flavoprotein]. It carries out the reaction octanoyl-CoA + oxidized [electron-transfer flavoprotein] + H(+) = (2E)-octenoyl-CoA + reduced [electron-transfer flavoprotein]. The catalysed reaction is decanoyl-CoA + oxidized [electron-transfer flavoprotein] + H(+) = (2E)-decenoyl-CoA + reduced [electron-transfer flavoprotein]. The enzyme catalyses dodecanoyl-CoA + oxidized [electron-transfer flavoprotein] + H(+) = (2E)-dodecenoyl-CoA + reduced [electron-transfer flavoprotein]. It catalyses the reaction tetradecanoyl-CoA + oxidized [electron-transfer flavoprotein] + H(+) = (2E)-tetradecenoyl-CoA + reduced [electron-transfer flavoprotein]. It carries out the reaction oxidized [electron-transfer flavoprotein] + hexadecanoyl-CoA + H(+) = (2E)-hexadecenoyl-CoA + reduced [electron-transfer flavoprotein]. Its pathway is lipid metabolism; mitochondrial fatty acid beta-oxidation. Its function is as follows. Medium-chain specific acyl-CoA dehydrogenase is one of the acyl-CoA dehydrogenases that catalyze the first step of mitochondrial fatty acid beta-oxidation, an aerobic process breaking down fatty acids into acetyl-CoA and allowing the production of energy from fats. The first step of fatty acid beta-oxidation consists in the removal of one hydrogen from C-2 and C-3 of the straight-chain fatty acyl-CoA thioester, resulting in the formation of trans-2-enoyl-CoA. Electron transfer flavoprotein (ETF) is the electron acceptor that transfers electrons to the main mitochondrial respiratory chain via ETF-ubiquinone oxidoreductase (ETF dehydrogenase). Among the different mitochondrial acyl-CoA dehydrogenases, medium-chain specific acyl-CoA dehydrogenase acts specifically on acyl-CoAs with saturated 6 to 12 carbons long primary chains. In Mus musculus (Mouse), this protein is Medium-chain specific acyl-CoA dehydrogenase, mitochondrial.